The sequence spans 142 residues: Large ribosomal subunit protein uL13 (142 aa).

Belongs to the universal ribosomal protein uL13 family. As to quaternary structure, part of the 50S ribosomal subunit.

Its function is as follows. This protein is one of the early assembly proteins of the 50S ribosomal subunit, although it is not seen to bind rRNA by itself. It is important during the early stages of 50S assembly. In Thioalkalivibrio sulfidiphilus (strain HL-EbGR7), this protein is Large ribosomal subunit protein uL13.